Reading from the N-terminus, the 505-residue chain is Megakaryocyte-associated tyrosine-protein kinase (505 aa).

Residues 46 to 108 (APGTQCMTKC…AAAALRHGEA (63 aa)) enclose the SH3 domain. Residues 120-209 (WFHGKISGQE…AICTKLVKPR (90 aa)) enclose the SH2 domain. Residues 233–481 (LTLGAQIGEG…IVEKLGRELR (249 aa)) form the Protein kinase domain. ATP contacts are provided by residues 239–247 (IGEGEFGAV) and Lys-260. The active-site Proton acceptor is the Asp-350. Residues 483-505 (VGVSAPAGGQEAEGSAPTRSQDP) are disordered.

The protein belongs to the protein kinase superfamily. Tyr protein kinase family. CSK subfamily. Interacts with KIT. Most abundant in brain, and to a lesser extent in the spleen, the thymus and the liver. Also found in the T-cell lineage.

It is found in the cytoplasm. The protein localises to the membrane. It catalyses the reaction L-tyrosyl-[protein] + ATP = O-phospho-L-tyrosyl-[protein] + ADP + H(+). Could play a significant role in the signal transduction of hematopoietic cells. May regulate tyrosine kinase activity of SRC-family members in brain by specifically phosphorylating their C-terminal regulatory tyrosine residue which acts as a negative regulatory site. It may play an inhibitory role in the control of T-cell proliferation. In Mus musculus (Mouse), this protein is Megakaryocyte-associated tyrosine-protein kinase (Matk).